Consider the following 566-residue polypeptide: Endoglucanase G (566 aa).

A signal peptide spans 1 to 30 (MKKAKAIFSLVVALMVLAIFCFAQNTGSTA). E226 acts as the Proton donor in catalysis. E381 (nucleophile) is an active-site residue. The interval 473-494 (GTPQASDPPATPTATPTKPAAS) is disordered. Low complexity predominate over residues 474 to 494 (TPQASDPPATPTATPTKPAAS). The Dockerin domain maps to 497–564 (PSFIYGDINS…LLRSIDKLPH (68 aa)).

It belongs to the glycosyl hydrolase 5 (cellulase A) family.

The enzyme catalyses Endohydrolysis of (1-&gt;4)-beta-D-glucosidic linkages in cellulose, lichenin and cereal beta-D-glucans.. Functionally, this enzyme catalyzes the endohydrolysis of 1,4-beta-glucosidic linkages in cellulose, lichenin and cereal beta-D-glucans. In Acetivibrio thermocellus (strain ATCC 27405 / DSM 1237 / JCM 9322 / NBRC 103400 / NCIMB 10682 / NRRL B-4536 / VPI 7372) (Clostridium thermocellum), this protein is Endoglucanase G (celG).